The chain runs to 801 residues: Cadherin-20 (801 aa).

The signal sequence occupies residues 1–34 (MWTTGRMSNAKSWLGLGTSLYFWALMDLTATVLS). Positions 35–59 (STPMPEVELETLFSGRSQSHQRSKR) are excised as a propeptide. Residues 60-619 (SWVWNQFFVL…AYLLPVSLSR (560 aa)) lie on the Extracellular side of the membrane. 5 consecutive Cadherin domains span residues 61–165 (WVWN…EPKF), 166–274 (LDGP…PPRF), 275–389 (PQKH…PPVF), 390–494 (EPGF…APEF), and 494–610 (FPRF…SPEA). Asparagine 261 carries N-linked (GlcNAc...) asparagine glycosylation. Asparagine 420, asparagine 461, and asparagine 542 each carry an N-linked (GlcNAc...) asparagine glycan. Residues 620–640 (GALIAILACIFVLLVLVLLIL) traverse the membrane as a helical segment. The Cytoplasmic segment spans residues 641 to 801 (SMRRHRKQPY…GASEGPAPLW (161 aa)).

In terms of tissue distribution, expressed in brain. Highest level of expression in the retina. In embryo it is synthesized by the forebrain, anterior neural ridge, developing visual system, primitive external granular layer of the cerebellum and a subset of neural crest cells likely to develop into melanoblasts.

The protein localises to the cell membrane. Its function is as follows. Cadherins are calcium-dependent cell adhesion proteins. They preferentially interact with themselves in a homophilic manner in connecting cells; cadherins may thus contribute to the sorting of heterogeneous cell types. The sequence is that of Cadherin-20 (Cdh20) from Mus musculus (Mouse).